The sequence spans 40 residues: Sapecin-C (40 aa).

Disulfide bonds link C3-C30, C16-C36, and C20-C38.

It belongs to the invertebrate defensin family. Type 1 subfamily. In terms of tissue distribution, hemocytes and fat body.

The protein resides in the secreted. Functionally, sapecins, which are potent bactericidal proteins, are produced in response to injury. Sapecin C is cytotoxic to Gram-positive bacteria. The polypeptide is Sapecin-C (Sarcophaga peregrina (Flesh fly)).